An 80-amino-acid polypeptide reads, in one-letter code: MAFLKKSLFLVLFLGLVSLSICEEKRENEDEEEQEDDEQSEEKRGMWSKIKNAGKAAAKASKKAAGKAALGAVSEALGEQ.

An N-terminal signal peptide occupies residues 1–22 (MAFLKKSLFLVLFLGLVSLSIC). The propeptide occupies 23-42 (EEKRENEDEEEQEDDEQSEE). The disordered stretch occupies residues 24–48 (EKRENEDEEEQEDDEQSEEKRGMWS). A compositionally biased stretch (acidic residues) spans 29–40 (EDEEEQEDDEQS). The residue at position 77 (leucine 77) is a Leucine amide. The propeptide occupies 79 to 80 (EQ).

It belongs to the frog skin active peptide (FSAP) family. Dermaseptin subfamily. Expressed by the skin glands.

It localises to the secreted. Functionally, possesses a potent antimicrobial activity against Gram-positive and Gram-negative bacteria. Probably acts by disturbing membrane functions with its amphipathic structure. In Agalychnis dacnicolor (Giant Mexican leaf frog), this protein is Dermaseptin-DA3.